We begin with the raw amino-acid sequence, 355 residues long: Holliday junction branch migration complex subunit RuvB (355 aa).

Residues Thr4 to Tyr190 form a large ATPase domain (RuvB-L) region. ATP is bound by residues Leu29, Arg30, Gly71, Lys74, Thr75, Thr76, Glu137 to Tyr139, Arg180, Tyr190, and Arg227. Thr75 lines the Mg(2+) pocket. The tract at residues Asp191–Asp261 is small ATPAse domain (RuvB-S). A head domain (RuvB-H) region spans residues Pro264–Gln355. Arg300, Arg319, and Arg324 together coordinate DNA.

It belongs to the RuvB family. In terms of assembly, homohexamer. Forms an RuvA(8)-RuvB(12)-Holliday junction (HJ) complex. HJ DNA is sandwiched between 2 RuvA tetramers; dsDNA enters through RuvA and exits via RuvB. An RuvB hexamer assembles on each DNA strand where it exits the tetramer. Each RuvB hexamer is contacted by two RuvA subunits (via domain III) on 2 adjacent RuvB subunits; this complex drives branch migration. In the full resolvosome a probable DNA-RuvA(4)-RuvB(12)-RuvC(2) complex forms which resolves the HJ.

The protein localises to the cytoplasm. The enzyme catalyses ATP + H2O = ADP + phosphate + H(+). Its function is as follows. The RuvA-RuvB-RuvC complex processes Holliday junction (HJ) DNA during genetic recombination and DNA repair, while the RuvA-RuvB complex plays an important role in the rescue of blocked DNA replication forks via replication fork reversal (RFR). RuvA specifically binds to HJ cruciform DNA, conferring on it an open structure. The RuvB hexamer acts as an ATP-dependent pump, pulling dsDNA into and through the RuvAB complex. RuvB forms 2 homohexamers on either side of HJ DNA bound by 1 or 2 RuvA tetramers; 4 subunits per hexamer contact DNA at a time. Coordinated motions by a converter formed by DNA-disengaged RuvB subunits stimulates ATP hydrolysis and nucleotide exchange. Immobilization of the converter enables RuvB to convert the ATP-contained energy into a lever motion, pulling 2 nucleotides of DNA out of the RuvA tetramer per ATP hydrolyzed, thus driving DNA branch migration. The RuvB motors rotate together with the DNA substrate, which together with the progressing nucleotide cycle form the mechanistic basis for DNA recombination by continuous HJ branch migration. Branch migration allows RuvC to scan DNA until it finds its consensus sequence, where it cleaves and resolves cruciform DNA. This is Holliday junction branch migration complex subunit RuvB from Burkholderia multivorans (strain ATCC 17616 / 249).